We begin with the raw amino-acid sequence, 221 residues long: uncharacterized protein (221 aa).

A disordered region spans residues 40 to 162 (TIEVEPSPVQ…EPPEKVELSP (123 aa)). Positions 47 to 60 (PVQQDNPPISSEQA) are enriched in polar residues. Positions 82-92 (SSAQQEATAQT) are enriched in low complexity.

This is an uncharacterized protein from Homo sapiens (Human).